Consider the following 322-residue polypeptide: Acetyl-coenzyme A carboxylase carboxyl transferase subunit alpha (322 aa).

One can recognise a CoA carboxyltransferase C-terminal domain in the interval 32–293 (DISEEIARLE…KRALQDALRQ (262 aa)).

The protein belongs to the AccA family. Acetyl-CoA carboxylase is a heterohexamer composed of biotin carboxyl carrier protein (AccB), biotin carboxylase (AccC) and two subunits each of ACCase subunit alpha (AccA) and ACCase subunit beta (AccD).

It is found in the cytoplasm. It catalyses the reaction N(6)-carboxybiotinyl-L-lysyl-[protein] + acetyl-CoA = N(6)-biotinyl-L-lysyl-[protein] + malonyl-CoA. The protein operates within lipid metabolism; malonyl-CoA biosynthesis; malonyl-CoA from acetyl-CoA: step 1/1. In terms of biological role, component of the acetyl coenzyme A carboxylase (ACC) complex. First, biotin carboxylase catalyzes the carboxylation of biotin on its carrier protein (BCCP) and then the CO(2) group is transferred by the carboxyltransferase to acetyl-CoA to form malonyl-CoA. The chain is Acetyl-coenzyme A carboxylase carboxyl transferase subunit alpha from Aromatoleum aromaticum (strain DSM 19018 / LMG 30748 / EbN1) (Azoarcus sp. (strain EbN1)).